The chain runs to 134 residues: D-ribose pyranase (134 aa).

Catalysis depends on His-20, which acts as the Proton donor. Substrate-binding positions include Asp-28, His-101, and 123–125 (YSN).

This sequence belongs to the RbsD / FucU family. RbsD subfamily. In terms of assembly, homodecamer.

The protein localises to the cytoplasm. It catalyses the reaction beta-D-ribopyranose = beta-D-ribofuranose. It participates in carbohydrate metabolism; D-ribose degradation; D-ribose 5-phosphate from beta-D-ribopyranose: step 1/2. Catalyzes the interconversion of beta-pyran and beta-furan forms of D-ribose. The chain is D-ribose pyranase from Pseudomonas syringae pv. syringae (strain B728a).